The following is a 489-amino-acid chain: Rhamnulokinase (489 aa).

Residue 13–17 participates in ATP binding; sequence ASSGR. A disulfide bond links Cys68 and Cys222. Substrate-binding positions include Gly83 and 236–238; that span reads HDT. Catalysis depends on Asp237, which acts as the Proton acceptor. Thr259 contacts ATP. Asn296 provides a ligand contact to substrate. Position 304 (Gln304) interacts with ATP. Residues Cys353 and Cys370 are joined by a disulfide bond. Gly402 is a binding site for ATP. Cysteines 413 and 417 form a disulfide.

Belongs to the rhamnulokinase family. Monomer. It depends on Mg(2+) as a cofactor.

It catalyses the reaction L-rhamnulose + ATP = L-rhamnulose 1-phosphate + ADP + H(+). The protein operates within carbohydrate degradation; L-rhamnose degradation; glycerone phosphate from L-rhamnose: step 2/3. In terms of biological role, involved in the catabolism of L-rhamnose (6-deoxy-L-mannose). Catalyzes the transfer of the gamma-phosphate group from ATP to the 1-hydroxyl group of L-rhamnulose to yield L-rhamnulose 1-phosphate. This is Rhamnulokinase from Escherichia coli O139:H28 (strain E24377A / ETEC).